A 140-amino-acid chain; its full sequence is Large ribosomal subunit protein uL11 (140 aa).

The protein belongs to the universal ribosomal protein uL11 family. Part of the ribosomal stalk of the 50S ribosomal subunit. Interacts with L10 and the large rRNA to form the base of the stalk. L10 forms an elongated spine to which L12 dimers bind in a sequential fashion forming a multimeric L10(L12)X complex. One or more lysine residues are methylated.

In terms of biological role, forms part of the ribosomal stalk which helps the ribosome interact with GTP-bound translation factors. The protein is Large ribosomal subunit protein uL11 of Desulforapulum autotrophicum (strain ATCC 43914 / DSM 3382 / VKM B-1955 / HRM2) (Desulfobacterium autotrophicum).